The primary structure comprises 361 residues: Phospho-N-acetylmuramoyl-pentapeptide-transferase (361 aa).

The next 10 helical transmembrane spans lie at 28–48 (LAVLVTLSLSFLIGPRLIKFL), 74–94 (TMGGIMIILSSCFSTLLLADL), 99–119 (IWITLFGFVSFSIIGFLDDYA), 135–155 (LLLQGIISLIVCILLEYTIDS), 167–187 (SLSMDLGYLYIFFAIFVIVGA), 203–223 (VPIALTAGSFALISYLVGNLI), 236–256 (TGELTIFCASIVGSCLGFLWF), 263–283 (VFMGDTGSLSLGGVLGIISVI), 288–308 (IVLGIVGGLFVIETISVIMQV), and 338–358 (KVVIRFWIISLIFVLIGLSSL).

The protein belongs to the glycosyltransferase 4 family. MraY subfamily. Mg(2+) serves as cofactor.

The protein resides in the cell inner membrane. The enzyme catalyses UDP-N-acetyl-alpha-D-muramoyl-L-alanyl-gamma-D-glutamyl-meso-2,6-diaminopimeloyl-D-alanyl-D-alanine + di-trans,octa-cis-undecaprenyl phosphate = di-trans,octa-cis-undecaprenyl diphospho-N-acetyl-alpha-D-muramoyl-L-alanyl-D-glutamyl-meso-2,6-diaminopimeloyl-D-alanyl-D-alanine + UMP. The protein operates within cell wall biogenesis; peptidoglycan biosynthesis. Functionally, catalyzes the initial step of the lipid cycle reactions in the biosynthesis of the cell wall peptidoglycan: transfers peptidoglycan precursor phospho-MurNAc-pentapeptide from UDP-MurNAc-pentapeptide onto the lipid carrier undecaprenyl phosphate, yielding undecaprenyl-pyrophosphoryl-MurNAc-pentapeptide, known as lipid I. The polypeptide is Phospho-N-acetylmuramoyl-pentapeptide-transferase (Rickettsia bellii (strain OSU 85-389)).